A 256-amino-acid polypeptide reads, in one-letter code: Capsid protein (256 aa).

The Bipartite nuclear localization signal motif lies at 3–20 (KRPADIIISTPGSKVRRR). The Nuclear localization signal motif lies at 40–54 (KRQSWTNRPINRKPR). A zinc finger lies at 68–85 (CEGPCKVQSFESRHDVVH). Positions 101–122 (LTHRVGKRFCVKSIYILGKIWM) match the Nuclear export signal motif. The short motif at 200 to 247 (RRFFRVNNYVVYNQQEAGKYENHTENALMLYMACTHASNPVYATLKIR) is the Bipartite nuclear localization signal element.

Belongs to the geminiviridae capsid protein family. As to quaternary structure, homomultimer. Binds to single-stranded and double-stranded viral DNA. Interacts (via nuclear localization signals) with host importin alpha-1a.

It localises to the virion. The protein localises to the host nucleus. Functionally, encapsidates the viral DNA into characteristic twinned ('geminate') particles. Binds the genomic viral ssDNA and shuttles it into and out of the cell nucleus. The CP of bipartite geminiviruses is not required for cell-to-cell or systemic movement. This Manihot esculenta (Cassava) protein is Capsid protein.